Reading from the N-terminus, the 1407-residue chain is Trichohyalin (1407 aa).

The segment at 1–91 (MSPLLKSIID…AQAAYYALGQ (91 aa)) is S-100-like. EF-hand domains follow at residues 23 to 48 (CDGAVLKKKDLKILLDREFGAVLQRP) and 49 to 84 (HDPETVDVMLELLDRDSDGLVGFDEFCLLIFKLAQA). Ca(2+) contacts are provided by Asp32, Asp62, Asp64, Asp66, and Glu73. Disordered regions lie at residues 148 to 172 (EEEEQRKKRERFEQHYSRQYRDKEQ), 218 to 237 (LREEEQQRRERREQHERALQ), 362 to 471 (REQA…EEEQ), 486 to 587 (EQLQ…ERER), 1014 to 1033 (REEERLRRQERDRKFREEER), 1062 to 1082 (KEEKQLRRQERDRKFREEEQQ), and 1313 to 1407 (EQFA…QYRP). Composition is skewed to basic and acidic residues over residues 362–381 (REQARERGESLTRRWQRQLE), 396–424 (RRQEEQSLRQDQERRQRQERERELEEQAR), 447–471 (SLRERQLRAEERQEQEQRFREEEEQ), and 554–587 (QREKRRQEREREYREEEKLQREEDEKRRRQERER). The segment covering 1313–1376 (EQFAREEKSR…FREDQSRRQV (64 aa)) has biased composition (basic and acidic residues).

This sequence belongs to the S100-fused protein family. Homodimer. Post-translationally, substrate of transglutaminase. Some 200 arginines are probably converted to citrullines by peptidylarginine deimidase. As to expression, found in the hard keratinizing tissues such as the inner root sheath (IRS) of hair follicles and medulla, and in the filiform papillae of dorsal tongue epithelium.

Functionally, intermediate filament-associated protein that associates in regular arrays with keratin intermediate filaments (KIF) of the inner root sheath cells of the hair follicle and the granular layer of the epidermis. It later becomes cross-linked to KIF by isodipeptide bonds. It may serve as scaffold protein, together with involucrin, in the organization of the cell envelope or even anchor the cell envelope to the KIF network. It may be involved in its own calcium-dependent postsynthetic processing during terminal differentiation. The chain is Trichohyalin (TCHH) from Oryctolagus cuniculus (Rabbit).